Consider the following 270-residue polypeptide: Interleukin-1 alpha (270 aa).

A propeptide spanning residues 1-114 (MAKVPDLFED…HDLEETIQPR (114 aa)) is cleaved from the precursor. The N-linked (GlcNAc...) asparagine glycan is linked to asparagine 64. Lysine 85 is modified (N6-acetyllysine). Residues 85–89 (KKRRL) form a nuclear localization signal (NLS) region. Phosphoserine is present on serine 90. N-linked (GlcNAc...) asparagine glycans are attached at residues asparagine 139 and asparagine 143.

The protein belongs to the IL-1 family. As to quaternary structure, monomer. Interacts with TMED10; the interaction mediates the translocation from the cytoplasm into the ERGIC (endoplasmic reticulum-Golgi intermediate compartment) and thereby secretion. Interacts with IL1R1. Interacts with S100A13; this interaction is the first step in the export of IL1A, followed by direct translocation of this complex across the plasma membrane. Acetylated within its nuclear localization sequence, which impacts subcellular localization. In terms of processing, proteolytic processed by CAPN1 in a calcium-dependent manner. Cleavage from 31 kDa precursor to 18 kDa biologically active molecules. Post-translationally, phosphorylated. Phosphorylation greatly enhances susceptibility to digestion and promotes the conversion of pre-IL1A alpha to the biologically active IL1A.

It localises to the nucleus. The protein localises to the cytoplasm. It is found in the secreted. In terms of biological role, cytokine constitutively present intracellularly in nearly all resting non-hematopoietic cells that plays an important role in inflammation and bridges the innate and adaptive immune systems. After binding to its receptor IL1R1 together with its accessory protein IL1RAP, forms the high affinity interleukin-1 receptor complex. Signaling involves the recruitment of adapter molecules such as MYD88, IRAK1 or IRAK4. In turn, mediates the activation of NF-kappa-B and the three MAPK pathways p38, p42/p44 and JNK pathways. Within the cell, acts as an alarmin and cell death results in its liberation in the extracellular space after disruption of the cell membrane to induce inflammation and alert the host to injury or damage. In addition to its role as a danger signal, which occurs when the cytokine is passively released by cell necrosis, directly senses DNA damage and acts as a signal for genotoxic stress without loss of cell integrity. The protein is Interleukin-1 alpha of Mus musculus (Mouse).